The following is a 206-amino-acid chain: Outer-membrane lipoprotein carrier protein (206 aa).

The N-terminal stretch at 1–21 (MKKLLCAVLLSPLLYSNAVLA) is a signal peptide.

Belongs to the LolA family. As to quaternary structure, monomer.

Its subcellular location is the periplasm. Functionally, participates in the translocation of lipoproteins from the inner membrane to the outer membrane. Only forms a complex with a lipoprotein if the residue after the N-terminal Cys is not an aspartate (The Asp acts as a targeting signal to indicate that the lipoprotein should stay in the inner membrane). The sequence is that of Outer-membrane lipoprotein carrier protein from Shewanella sp. (strain MR-4).